The primary structure comprises 187 residues: Elongation factor P (187 aa).

It belongs to the elongation factor P family.

Its subcellular location is the cytoplasm. It participates in protein biosynthesis; polypeptide chain elongation. Its function is as follows. Involved in peptide bond synthesis. Stimulates efficient translation and peptide-bond synthesis on native or reconstituted 70S ribosomes in vitro. Probably functions indirectly by altering the affinity of the ribosome for aminoacyl-tRNA, thus increasing their reactivity as acceptors for peptidyl transferase. The sequence is that of Elongation factor P from Corynebacterium glutamicum (strain R).